We begin with the raw amino-acid sequence, 85 residues long: Large ribosomal subunit protein bL31B (85 aa).

It belongs to the bacterial ribosomal protein bL31 family. Type B subfamily. Part of the 50S ribosomal subunit.

In Kocuria rhizophila (strain ATCC 9341 / DSM 348 / NBRC 103217 / DC2201), this protein is Large ribosomal subunit protein bL31B.